A 317-amino-acid chain; its full sequence is Cell division protein FtsQ (317 aa).

Over 1–63 (MDGGGRFVFA…RIHIPAHTGT (63 aa)) the chain is Cytoplasmic. The helical transmembrane segment at 64-82 (ISAVAFYAMIGLYGMSLGG) threads the bilayer. Residues 83-317 (HTNIVTQTTT…KALKKAEKNT (235 aa)) lie on the Periplasmic side of the membrane. The POTRA domain maps to 97 to 165 (FAVEDVKVSG…KTVEVRLKER (69 aa)).

Belongs to the FtsQ/DivIB family. FtsQ subfamily.

It localises to the cell inner membrane. Functionally, essential cell division protein. This chain is Cell division protein FtsQ, found in Agrobacterium fabrum (strain C58 / ATCC 33970) (Agrobacterium tumefaciens (strain C58)).